The chain runs to 368 residues: Endoglucanase (368 aa).

Positions 1-21 (MNVLRSGLVTMLLLAAFSVQA) are cleaved as a signal peptide. Glu55 acts as the Proton donor in catalysis. Asp116 serves as the catalytic Nucleophile.

This sequence belongs to the glycosyl hydrolase 8 (cellulase D) family.

It localises to the secreted. The enzyme catalyses Endohydrolysis of (1-&gt;4)-beta-D-glucosidic linkages in cellulose, lichenin and cereal beta-D-glucans.. It participates in glycan metabolism; bacterial cellulose biosynthesis. Its function is as follows. Hydrolyzes carboxymethylcellulose. In Escherichia coli O157:H7, this protein is Endoglucanase (bcsZ).